Consider the following 371-residue polypeptide: Cytochrome b (371 aa).

Transmembrane regions (helical) follow at residues 25–45, 69–90, 105–125, and 170–190; these read FGSM…SLSM, WVMQ…YMYI, WLSG…GYVL, and FFAL…IHIM. Histidine 75 contributes to the heme b binding site. The heme b site is built by histidine 174 and histidine 188. A ubiquinone is bound at residue histidine 193. Transmembrane regions (helical) follow at residues 218 to 238, 280 to 300, 312 to 332, and 339 to 358; these read YKDI…VSFF, LGGA…PFTH, LMQF…WTAT, and FTTI…MSNP.

It belongs to the cytochrome b family. As to quaternary structure, the cytochrome bc1 complex contains 3 respiratory subunits (MT-CYB, CYC1 and UQCRFS1), 2 core proteins (UQCRC1 and UQCRC2) and probably 6 low-molecular weight proteins. Heme b is required as a cofactor.

It localises to the mitochondrion inner membrane. In terms of biological role, component of the ubiquinol-cytochrome c reductase complex (complex III or cytochrome b-c1 complex) that is part of the mitochondrial respiratory chain. The b-c1 complex mediates electron transfer from ubiquinol to cytochrome c. Contributes to the generation of a proton gradient across the mitochondrial membrane that is then used for ATP synthesis. The protein is Cytochrome b (MT-CYB) of Candoia aspera (New Guinea boa).